The following is a 573-amino-acid chain: BICD family-like cargo adapter 1 (573 aa).

A disordered region spans residues 67–97 (ERPSDPGEHPQAEPGSLAEGAGPQPPPSQDP). Residues 68–77 (RPSDPGEHPQ) show a composition bias toward basic and acidic residues. A CC1 box motif is present at residues 113–117 (AARLG). Residues 118–376 (KALLERNQDM…QLWEAYCQVR (259 aa)) adopt a coiled-coil conformation. The segment at 386–412 (DSADSAVSTDSSMDESSETSSAKDVPA) is disordered. Residues 387 to 396 (SADSAVSTDS) show a composition bias toward low complexity. Positions 440-525 (LSVEMTALKE…LEAWQDDMHR (86 aa)) form a coiled coil.

It belongs to the BICDR family. Part of a tripartite complex with dynein and dynactin, acts an adapter linking the dynein motor complex and dynactin. Interacts with KIF1C. Interacts with RAB6A and RAB6B; interaction is specific to Rab6.

The protein resides in the cytoplasm. The protein localises to the cytoskeleton. It is found in the microtubule organizing center. Its subcellular location is the centrosome. Functionally, acts as an adapter protein linking the dynein motor complex to various cargos and converts dynein from a non-processive to a highly processive motor in the presence of dynactin. Facilitates the interaction between dynein and dynactin and activates dynein processivity (the ability to move along a microtubule for a long distance without falling off the track). Predominantly recruits 2 dyneins, which increases both the force and speed of the microtubule motor. Component of secretory vesicle machinery in developing neurons that acts as a regulator of neurite outgrowth. Regulates the secretory vesicle transport by controlling the accumulation of Rab6-containing secretory vesicles in the pericentrosomal region restricting anterograde secretory transport during the early phase of neuronal differentiation, thereby inhibiting neuritogenesis. In Homo sapiens (Human), this protein is BICD family-like cargo adapter 1 (BICDL1).